We begin with the raw amino-acid sequence, 1358 residues long: Phosphoinositide 3-kinase regulatory subunit 4 (1358 aa).

G2 carries the N-myristoyl glycine lipid modification. The 299-residue stretch at 26–324 (FEYDKSLGST…AFPEIFYTFL (299 aa)) folds into the Protein kinase domain. ATP-binding positions include 32-40 (LGSTRFFKV) and K53. D148 functions as the Proton acceptor in the catalytic mechanism. HEAT repeat units lie at residues 373-411 (NGLV…RLGV), 413-450 (ILLD…LVKE), 458-495 (IYPE…TALR), 531-570 (QALH…FFGR), 572-610 (KAND…YVGW), 612-648 (SSSI…LGLL), and 690-726 (DVYC…PVSR). S808, S813, S853, and S865 each carry phosphoserine. Residues 875 to 899 (LPKGSDQEVIQTGKPPRSESSAGIC) form a disordered region. WD repeat units lie at residues 991 to 1030 (EHKS…GKTT), 1040 to 1079 (RVGG…LPKS), 1093 to 1134 (KEDG…NAWT), 1139 to 1178 (LKSG…PISS), 1182 to 1223 (PSRA…RRFT), and 1237 to 1278 (PSPH…RSYV). A disordered region spans residues 1307 to 1326 (KQKVGPSDDTPRRGPESLPV). The segment covering 1315–1326 (DTPRRGPESLPV) has biased composition (basic and acidic residues). T1316 bears the Phosphothreonine mark. A WD 7 repeat occupies 1327 to 1358 (GHHDIITDVATFQTTQGFIVTASRDGIVKVWK).

It belongs to the protein kinase superfamily. Ser/Thr protein kinase family. In terms of assembly, component of the PI3K (PI3KC3/PI3K-III/class III phosphatidylinositol 3-kinase) complex the core of which is composed of the catalytic subunit PIK3C3, the regulatory subunit PIK3R4 and BECN1 associating with additional regulatory/auxiliary subunits to form alternative complex forms. Alternative complex forms containing a fourth regulatory subunit in a mutually exclusive manner are PI3K complex I (PI3KC3-C1) containing ATG14, and PI3K complex II (PI3KC3-C2) containing UVRAG. PI3KC3-C1 displays a V-shaped architecture with PIK3R4 serving as a bridge between PIK3C3 and the ATG14:BECN1 subcomplex. Both, PI3KC3-C1 and PI3KC3-C2, can associate with further regulatory subunits, such as RUBCN, SH3GLB1/Bif-1, AMBRA1 and NRBF2. PI3KC3-C1 probably associates with PIK3CB. Interacts with RAB7A in the presence of PIK3C3/VPS34. Interacts with NRBF2. Interacts with ARMC3. Requires Mn(2+) as cofactor. Myristoylated. In terms of processing, probably autophosphorylated.

It is found in the late endosome. It localises to the cytoplasmic vesicle. The protein localises to the autophagosome. The protein resides in the membrane. The enzyme catalyses L-seryl-[protein] + ATP = O-phospho-L-seryl-[protein] + ADP + H(+). It carries out the reaction L-threonyl-[protein] + ATP = O-phospho-L-threonyl-[protein] + ADP + H(+). Functionally, regulatory subunit of the PI3K complex that mediates formation of phosphatidylinositol 3-phosphate; different complex forms are believed to play a role in multiple membrane trafficking pathways: PI3KC3-C1 is involved in initiation of autophagosomes and PI3KC3-C2 in maturation of autophagosomes and endocytosis. Involved in regulation of degradative endocytic trafficking and cytokinesis, probably in the context of PI3KC3-C2. Its function is as follows. Regulatory subunit of the PI3K complex. May regulate membrane trafficking late in the endocytic pathway. This is Phosphoinositide 3-kinase regulatory subunit 4 (PIK3R4) from Pongo abelii (Sumatran orangutan).